A 297-amino-acid polypeptide reads, in one-letter code: Probable endonuclease 4 (297 aa).

His-69, His-110, Glu-145, Asp-179, His-182, His-214, Asp-227, His-229, and Glu-259 together coordinate Zn(2+).

The protein belongs to the AP endonuclease 2 family. Zn(2+) is required as a cofactor.

It carries out the reaction Endonucleolytic cleavage to 5'-phosphooligonucleotide end-products.. Endonuclease IV plays a role in DNA repair. It cleaves phosphodiester bonds at apurinic or apyrimidinic (AP) sites, generating a 3'-hydroxyl group and a 5'-terminal sugar phosphate. The chain is Probable endonuclease 4 from Listeria welshimeri serovar 6b (strain ATCC 35897 / DSM 20650 / CCUG 15529 / CIP 8149 / NCTC 11857 / SLCC 5334 / V8).